The primary structure comprises 283 residues: Serine protease 57 (283 aa).

The N-terminal stretch at 1–31 (MGLGLRGWGRPLLTVATALMLPVKPPAGSWG) is a signal peptide. In terms of domain architecture, Peptidase S1 spans 34-263 (IIGGHEVTPH…FVAWIWDVVR (230 aa)). Cysteines 59 and 75 form a disulfide. Active-site charge relay system residues include H74 and D122. N-linked (GlcNAc...) asparagine glycans are attached at residues N129 and N189. 3 disulfide bridges follow: C157–C224, C188–C202, and C214–C239. S218 functions as the Charge relay system in the catalytic mechanism.

Belongs to the peptidase S1 family. Post-translationally, after cleavage of the signal peptide, the N-terminus is probably further processed by CTSC. Processing by CTSC is probably required for accumulation in cytoplasmic granules; in the absence of CTSC the protein does not accumulate. N-glycosylated. As to expression, detected in peripheral blood neutrophil granulocytes, but not in other types of leukocytes. Detected in neutrophils and neutrophil precursors in bone marrow (at protein level). Detected in myeloblasts and promyelocytes in bone marrow.

It is found in the cytoplasmic granule lumen. The protein resides in the secreted. With respect to regulation, inhibited by SERPINA1, SERPINC1 and SERPING1. Functionally, serine protease that cleaves preferentially after Arg residues. Can also cleave after citrulline (deimidated arginine) and methylarginine residues. This is Serine protease 57 (PRSS57) from Homo sapiens (Human).